A 134-amino-acid chain; its full sequence is Arsenate reductase (134 aa).

Catalysis depends on nucleophile residues C11, C83, and C90. Intrachain disulfides connect C11-C83 and C83-C90.

The protein belongs to the low molecular weight phosphotyrosine protein phosphatase family. Thioredoxin-coupled ArsC subfamily.

It localises to the cytoplasm. The catalysed reaction is arsenate + [thioredoxin]-dithiol + H(+) = arsenite + [thioredoxin]-disulfide + H2O. Catalyzes the reduction of arsenate [As(V)] to arsenite [As(III)]. This chain is Arsenate reductase, found in Bacillus cereus (strain ZK / E33L).